We begin with the raw amino-acid sequence, 180 residues long: ATP synthase subunit delta (180 aa).

The protein belongs to the ATPase delta chain family. In terms of assembly, F-type ATPases have 2 components, F(1) - the catalytic core - and F(0) - the membrane proton channel. F(1) has five subunits: alpha(3), beta(3), gamma(1), delta(1), epsilon(1). F(0) has three main subunits: a(1), b(2) and c(10-14). The alpha and beta chains form an alternating ring which encloses part of the gamma chain. F(1) is attached to F(0) by a central stalk formed by the gamma and epsilon chains, while a peripheral stalk is formed by the delta and b chains.

The protein localises to the cell inner membrane. Its function is as follows. F(1)F(0) ATP synthase produces ATP from ADP in the presence of a proton or sodium gradient. F-type ATPases consist of two structural domains, F(1) containing the extramembraneous catalytic core and F(0) containing the membrane proton channel, linked together by a central stalk and a peripheral stalk. During catalysis, ATP synthesis in the catalytic domain of F(1) is coupled via a rotary mechanism of the central stalk subunits to proton translocation. This protein is part of the stalk that links CF(0) to CF(1). It either transmits conformational changes from CF(0) to CF(1) or is implicated in proton conduction. This chain is ATP synthase subunit delta, found in Paracidovorax citrulli (strain AAC00-1) (Acidovorax citrulli).